The primary structure comprises 212 residues: Thymidylate kinase (212 aa).

Residue 10-17 (GPDGAGKS) coordinates ATP.

It belongs to the thymidylate kinase family.

The enzyme catalyses dTMP + ATP = dTDP + ADP. In terms of biological role, phosphorylation of dTMP to form dTDP in both de novo and salvage pathways of dTTP synthesis. The protein is Thymidylate kinase of Lactobacillus helveticus (strain DPC 4571).